The primary structure comprises 515 residues: Maturase K (515 aa).

This sequence belongs to the intron maturase 2 family. MatK subfamily.

It localises to the plastid. Its subcellular location is the chloroplast. Functionally, usually encoded in the trnK tRNA gene intron. Probably assists in splicing its own and other chloroplast group II introns. The chain is Maturase K from Pinus densiflora (Japanese red pine).